Reading from the N-terminus, the 563-residue chain is Arginine--tRNA ligase (563 aa).

Residues 121 to 131 (PNIAKPFSIGH) carry the 'HIGH' region motif.

Belongs to the class-I aminoacyl-tRNA synthetase family. In terms of assembly, monomer.

The protein resides in the cytoplasm. It carries out the reaction tRNA(Arg) + L-arginine + ATP = L-arginyl-tRNA(Arg) + AMP + diphosphate. This chain is Arginine--tRNA ligase, found in Streptococcus thermophilus (strain ATCC BAA-250 / LMG 18311).